The primary structure comprises 275 residues: MANYTAADVKRLRELTGSGMMACKNALAEAEGDFDKAVEQLRIKGAKDVGKRAERTTAEGLVVSKDGVLLELDCETDFVAKNEDFLKLAESIVTVAAAAKPADVDALKALDLDGKTVDTVIQEQSAKIGEKLVLSKIASFDGPVAVYLHKRSADLPPAVGVLVEYTGEGDAAAEAARGAAMQVAALKAKYVTRDEVPEDIVANERHIAEETARAEGKPEQALPKIIEGRVNGYFKDVVLTEQSSVQDSKKSVKAILDEAGVTIKRFVRFEVGASS.

The tract at residues 76–79 (TDFV) is involved in Mg(2+) ion dislocation from EF-Tu.

Belongs to the EF-Ts family.

The protein localises to the cytoplasm. Functionally, associates with the EF-Tu.GDP complex and induces the exchange of GDP to GTP. It remains bound to the aminoacyl-tRNA.EF-Tu.GTP complex up to the GTP hydrolysis stage on the ribosome. This is Elongation factor Ts from Rhodococcus jostii (strain RHA1).